The sequence spans 25 residues: Tubulin alpha chain (25 aa).

Gln11 serves as a coordination point for GTP.

It belongs to the tubulin family. As to quaternary structure, dimer of alpha and beta chains. A typical microtubule is a hollow water-filled tube with an outer diameter of 25 nm and an inner diameter of 15 nM. Alpha-beta heterodimers associate head-to-tail to form protofilaments running lengthwise along the microtubule wall with the beta-tubulin subunit facing the microtubule plus end conferring a structural polarity. Microtubules usually have 13 protofilaments but different protofilament numbers can be found in some organisms and specialized cells. Mg(2+) serves as cofactor.

The protein localises to the cytoplasm. It localises to the cytoskeleton. The catalysed reaction is GTP + H2O = GDP + phosphate + H(+). Tubulin is the major constituent of microtubules, a cylinder consisting of laterally associated linear protofilaments composed of alpha- and beta-tubulin heterodimers. Microtubules grow by the addition of GTP-tubulin dimers to the microtubule end, where a stabilizing cap forms. Below the cap, tubulin dimers are in GDP-bound state, owing to GTPase activity of alpha-tubulin. The protein is Tubulin alpha chain of Leptomonas seymouri.